A 436-amino-acid polypeptide reads, in one-letter code: MVLPTVAIVGRPNVGKSTLFNRIAGERISIVEDIEGVTRDRIYATGEWLNRQFSLIDTGGIDDVDAPFMEQIKHQAQIAMEEADVIVFVVSGKEGVTDADEYVSKILYRTNTPVILAVNKVDNPEMRNDIYDFYSLGLGDPYPVSSVHGIGTGDVLDAIVENLPVEEAEENDDIIRFSLIGRPNVGKSSLINAILGEDRVIASPVAGTTRDAIDTHFTDADGQEFTMIDTAGMRKSGKIYENTEKYSVMRAMRAIDRSGVVLMVINAEEGIREYDKRIAGFAHEAGKGMIIVVNKWDTIDKDNHTVAKWEADIRDQFQFLTYAPIIFVSALTKQRLNKLPDLIKRISESQNKRIPSAVLNDVIMDAIAINPTPTDKGKRLKIFYATQVSVKPPTFVVFVNEEELMHFSYLRFLENQIRAAFTFEGTPIHLIARKRK.

2 consecutive EngA-type G domains span residues 4-167 and 175-351; these read PTVA…PVEE and IRFS…ESQN. GTP-binding positions include 10 to 17, 57 to 61, 119 to 122, 181 to 188, 229 to 233, and 294 to 297; these read GRPNVGKS, DTGGI, NKVD, DTAGM, and NKWD. The region spanning 352–436 is the KH-like domain; that stretch reads KRIPSAVLND…PIHLIARKRK (85 aa).

The protein belongs to the TRAFAC class TrmE-Era-EngA-EngB-Septin-like GTPase superfamily. EngA (Der) GTPase family. As to quaternary structure, associates with the 50S ribosomal subunit.

GTPase that plays an essential role in the late steps of ribosome biogenesis. This chain is GTPase Der, found in Streptococcus pyogenes serotype M5 (strain Manfredo).